A 712-amino-acid polypeptide reads, in one-letter code: Phosphomethylpyrimidine synthase (712 aa).

Residues 14–49 (AIDITAPESTIPNKSKVPNKSAESSQSTVPKAPSRR) form a disordered region. Residues 20–42 (PESTIPNKSKVPNKSAESSQSTV) show a composition bias toward polar residues. Substrate-binding positions include asparagine 283, methionine 312, tyrosine 341, histidine 377, 397–399 (SRG), 438–441 (DGMR), and glutamate 477. Histidine 481 is a binding site for Zn(2+). Tyrosine 504 contacts substrate. Histidine 545 serves as a coordination point for Zn(2+). Cysteine 625, cysteine 628, and cysteine 633 together coordinate [4Fe-4S] cluster.

It belongs to the ThiC family. As to quaternary structure, homodimer. It depends on [4Fe-4S] cluster as a cofactor.

It carries out the reaction 5-amino-1-(5-phospho-beta-D-ribosyl)imidazole + S-adenosyl-L-methionine = 4-amino-2-methyl-5-(phosphooxymethyl)pyrimidine + CO + 5'-deoxyadenosine + formate + L-methionine + 3 H(+). Its pathway is cofactor biosynthesis; thiamine diphosphate biosynthesis. In terms of biological role, catalyzes the synthesis of the hydroxymethylpyrimidine phosphate (HMP-P) moiety of thiamine from aminoimidazole ribotide (AIR) in a radical S-adenosyl-L-methionine (SAM)-dependent reaction. This is Phosphomethylpyrimidine synthase from Shewanella putrefaciens (strain CN-32 / ATCC BAA-453).